Consider the following 267-residue polypeptide: Tryptophan synthase alpha chain (267 aa).

Residues Glu-49 and Asp-60 each act as proton acceptor in the active site.

The protein belongs to the TrpA family. In terms of assembly, tetramer of two alpha and two beta chains.

The catalysed reaction is (1S,2R)-1-C-(indol-3-yl)glycerol 3-phosphate + L-serine = D-glyceraldehyde 3-phosphate + L-tryptophan + H2O. It participates in amino-acid biosynthesis; L-tryptophan biosynthesis; L-tryptophan from chorismate: step 5/5. Its function is as follows. The alpha subunit is responsible for the aldol cleavage of indoleglycerol phosphate to indole and glyceraldehyde 3-phosphate. In Salinispora tropica (strain ATCC BAA-916 / DSM 44818 / JCM 13857 / NBRC 105044 / CNB-440), this protein is Tryptophan synthase alpha chain.